The chain runs to 503 residues: Probable cytosol aminopeptidase (503 aa).

2 residues coordinate Mn(2+): lysine 270 and aspartate 275. The active site involves lysine 282. The Mn(2+) site is built by aspartate 293, aspartate 352, and glutamate 354. Residue arginine 356 is part of the active site.

The protein belongs to the peptidase M17 family. It depends on Mn(2+) as a cofactor.

Its subcellular location is the cytoplasm. It carries out the reaction Release of an N-terminal amino acid, Xaa-|-Yaa-, in which Xaa is preferably Leu, but may be other amino acids including Pro although not Arg or Lys, and Yaa may be Pro. Amino acid amides and methyl esters are also readily hydrolyzed, but rates on arylamides are exceedingly low.. The enzyme catalyses Release of an N-terminal amino acid, preferentially leucine, but not glutamic or aspartic acids.. Its function is as follows. Presumably involved in the processing and regular turnover of intracellular proteins. Catalyzes the removal of unsubstituted N-terminal amino acids from various peptides. This Edwardsiella ictaluri (strain 93-146) protein is Probable cytosol aminopeptidase.